A 160-amino-acid chain; its full sequence is Cytochrome b6-f complex subunit 4 (160 aa).

3 consecutive transmembrane segments (helical) span residues L36–V56, L95–E115, and T131–I151.

The protein belongs to the cytochrome b family. PetD subfamily. In terms of assembly, the 4 large subunits of the cytochrome b6-f complex are cytochrome b6, subunit IV (17 kDa polypeptide, petD), cytochrome f and the Rieske protein, while the 4 small subunits are petG, petL, petM and petN. The complex functions as a dimer.

It is found in the plastid. The protein localises to the chloroplast thylakoid membrane. Functionally, component of the cytochrome b6-f complex, which mediates electron transfer between photosystem II (PSII) and photosystem I (PSI), cyclic electron flow around PSI, and state transitions. The chain is Cytochrome b6-f complex subunit 4 from Daucus carota (Wild carrot).